Reading from the N-terminus, the 266-residue chain is Vitamin B12-binding protein (266 aa).

Positions 1–22 (MAKSLFRALVALSFLAPLWLNA) are cleaved as a signal peptide. A Fe/B12 periplasmic-binding domain is found at 25–266 (RVITLSPANT…QLCNALSQVD (242 aa)). Cyanocob(III)alamin-binding positions include Tyr50 and 242–246 (DWFER). The cysteines at positions 183 and 259 are disulfide-linked.

This sequence belongs to the BtuF family. The complex is composed of two ATP-binding proteins (BtuD), two transmembrane proteins (BtuC) and a solute-binding protein (BtuF).

The protein resides in the periplasm. Functionally, part of the ABC transporter complex BtuCDF involved in vitamin B12 import. Binds vitamin B12 and delivers it to the periplasmic surface of BtuC. This Shigella flexneri protein is Vitamin B12-binding protein.